The following is a 714-amino-acid chain: Fatty acid oxidation complex subunit alpha (714 aa).

Positions methionine 1 to proline 190 are enoyl-CoA hydratase. The interval alanine 306–glutamine 714 is 3-hydroxyacyl-CoA dehydrogenase.

The protein in the N-terminal section; belongs to the enoyl-CoA hydratase/isomerase family. In the central section; belongs to the 3-hydroxyacyl-CoA dehydrogenase family. As to quaternary structure, heterotetramer of two alpha chains (FadJ) and two beta chains (FadI).

It localises to the cytoplasm. The enzyme catalyses a (3S)-3-hydroxyacyl-CoA = a (2E)-enoyl-CoA + H2O. The catalysed reaction is a 4-saturated-(3S)-3-hydroxyacyl-CoA = a (3E)-enoyl-CoA + H2O. It catalyses the reaction a (3S)-3-hydroxyacyl-CoA + NAD(+) = a 3-oxoacyl-CoA + NADH + H(+). It carries out the reaction (3S)-3-hydroxybutanoyl-CoA = (3R)-3-hydroxybutanoyl-CoA. It functions in the pathway lipid metabolism; fatty acid beta-oxidation. Its function is as follows. Catalyzes the formation of a hydroxyacyl-CoA by addition of water on enoyl-CoA. Also exhibits 3-hydroxyacyl-CoA epimerase and 3-hydroxyacyl-CoA dehydrogenase activities. The polypeptide is Fatty acid oxidation complex subunit alpha (Escherichia coli O45:K1 (strain S88 / ExPEC)).